Consider the following 235-residue polypeptide: Small ribosomal subunit protein eS4 (235 aa).

The 74-residue stretch at 37–110 folds into the S4 RNA-binding domain; the sequence is LPLGLIIRDV…KGRLVLYKLN (74 aa).

This sequence belongs to the eukaryotic ribosomal protein eS4 family.

This is Small ribosomal subunit protein eS4 from Methanosarcina mazei (strain ATCC BAA-159 / DSM 3647 / Goe1 / Go1 / JCM 11833 / OCM 88) (Methanosarcina frisia).